Here is a 488-residue protein sequence, read N- to C-terminus: 5'-3' exonuclease PLD3 (488 aa).

Residues 1 to 38 (MKPKLMYQELKVPVEEPAGELPMNEIEAWKAAEKKARW) lie on the Cytoplasmic side of the membrane. Residues 39-59 (VLLVLILAVVGFGALMTQLFL) traverse the membrane as a helical; Signal-anchor for type II membrane protein segment. Topologically, residues 60 to 488 (WEYGDLHLFG…DSVGNACRLL (429 aa)) are lumenal. Cystine bridges form between cysteine 77-cysteine 237 and cysteine 81-cysteine 235. N-linked (GlcNAc...) asparagine glycosylation is found at asparagine 97 and asparagine 132. In terms of domain architecture, PLD phosphodiesterase 1 spans 194-221 (THGVLHTKFWVVDQTHFYLGSANMDWRS). Catalysis depends on residues histidine 199, lysine 201, and aspartate 206. The active-site Proton donor is histidine 199. Positions 199 and 201 each coordinate phosphate. Residue asparagine 216 coordinates phosphate. N-linked (GlcNAc...) asparagine glycosylation is found at asparagine 234, asparagine 282, and asparagine 385. A disulfide bond links cysteine 364 and cysteine 485. In terms of domain architecture, PLD phosphodiesterase 2 spans 409–435 (YARVNHNKYMVTERTTYIGTSNWSGSY). Histidine 414 contacts phosphate. The Nucleophile role is filled by histidine 414. Phenylalanine 436 lines the Mg(2+) pocket.

Belongs to the phospholipase D family. Homodimer. Interacts with APP. In terms of processing, N-glycosylated. Post-translationally, proteolytically processed to a soluble form that is stable within endosomes and lysosomes. During transport through the secretory pathway becomes proteolysed by cysteine proteases, thereby releasing a stable soluble lysosomal lumenal polypeptide, whereas the transmembrane-bound fragment is rapidly degraded. Its transport route to lysosomes involves ubiquitination and the ESCRT complex. Ubiquitinated. Ubiquitination mediates sorting into lysosomes.

It localises to the endoplasmic reticulum membrane. It is found in the lysosome lumen. Its subcellular location is the early endosome membrane. The protein resides in the late endosome membrane. The protein localises to the golgi apparatus membrane. It localises to the endosome membrane. The catalysed reaction is Exonucleolytic cleavage in the 5'- to 3'-direction to yield nucleoside 3'-phosphates.. The enzyme catalyses a 5'-end 5'-dephospho-ribonucleotidyl-ribonucleotide-RNA + H2O = a ribonucleoside 3'-phosphate + a 5'-end dephospho-ribonucleoside-RNA + H(+). It catalyses the reaction a ribonucleoside 3'-phosphate-2'-3'-cyclophospho-GMP + H2O = a ribonucleoside 3'-phosphate + 2',3'-cyclophospho-GMP + H(+). It carries out the reaction a 5'-end 5'-dephospho-2'-deoxyribonucleotidyl-2'-deoxyribonucleotide in single-stranded DNA + H2O = a 5'-end dephospho-2'-deoxyribonucleoside in single-stranded DNA + a 2'-deoxyribonucleoside 3'-phosphate + H(+). The catalysed reaction is a 5'-end 5'-phospho-2'-deoxyribonucleotide in single-stranded DNA + H2O = a 5'-end 5'-dephospho-2'-deoxyribonucleotide in single-stranded DNA + phosphate. The enzyme catalyses a 3-lyso-sn-glycero-1-phospho-(3'-acyl-1'-sn-glycerol) + a 1-acyl-sn-glycerol = a 3-acyl-sn-glycero-1-phospho-(3'-acyl-1'-sn-glycerol) + glycerol. It catalyses the reaction 3-lyso-sn-glycero-1-phospho-(3'-(9Z-octadecenoyl)-1'-sn-glycerol) + 1-(9Z-octadecenoyl)-sn-glycerol = 3-(9Z-octadecenoyl)-sn-glycero-1-phospho-(3'-(9Z-octadecenoyl)-1'-sn-glycerol) + glycerol. In terms of biological role, 5'-&gt;3' exonuclease that hydrolyzes the phosphodiester bond of single-stranded DNA (ssDNA) and RNA molecules to form nucleoside 3'-monophosphates and 5'-end 5'-hydroxy deoxyribonucleotide/ribonucleotide fragments. Partially redundant with PLD4, can cleave all four nucleotides displaying higher efficiency for ssDNA and RNA fragments initiated with uridine and guanosine residues and lower efficiency for cytidine-initiated substrates. As a result, it does not always degrade polynucleotides to the single nucleotide level, it can stall at specific sites sparing certain fragments from exonucleolytic degradation. Processes self and pathogenic ssDNA and RNA molecules that reach the endolysosomal compartment via phagocytosis or autophagy and may serve as 'danger' signals for recognition by innate immune receptors such as toll-like receptors (TLRs). Degrades mitochondrial CpG-rich ssDNA fragments to prevent TLR9 activation and autoinflammatory response, but it can cleave viral RNA to generate ligands for TLR7 activation and initiate antiviral immune responses. In plasmacytoid dendritic cells, it cooperates with endonuclease RNASET2 to release 2',3'-cyclic guanosine monophosphate (2',3'-cGMP), a potent stimulatory ligand for TLR7. Produces 2',3'-cGMPs and cytidine-rich RNA fragments that occupy TLR7 ligand-binding pockets and trigger a signaling-competent state. Can exert polynucleotide phosphatase activity toward 5'-phosphorylated ssDNA substrates although at a slow rate. Transphosphatidylase that catalyzes the exchange with R to S stereo-inversion of the glycerol moiety between (S,R)-lysophosphatidylglycerol (LPG) and monoacylglycerol (MAG) substrates to yield (S,S)-bis(monoacylglycero)phosphate (BMP). Can synthesize a variety of (S,S)-BMPs representing the main phospholipid constituent of lysosomal intralumenal vesicle (ILV) membranes that bind acid hydrolases for lipid degradation. Regulates the homeostasis and interorganellar communication of the endolysosomal system with an overall impact on cellular removal of dysfunctional organelles via autophagy as well as proper protein and lipid turnover. May play a role in myotube formation in response to ER stress. In Rattus norvegicus (Rat), this protein is 5'-3' exonuclease PLD3 (Pld3).